The sequence spans 290 residues: 2-hydroxy-6-oxo-6-(2'-aminophenyl)hexa-2,4-dienoic acid hydrolase (290 aa).

Catalysis depends on residues Ser114, Asp233, and His261.

This sequence belongs to the DmpD/TodF/XylF esterase family. Homodimer.

It carries out the reaction (2E,4E)-6-(2-aminophenyl)-2-hydroxy-6-oxohexa-2,4-dienoate + H2O = (2E)-2-hydroxypenta-2,4-dienoate + anthranilate + H(+). It functions in the pathway xenobiotic degradation; carbazole degradation. In terms of biological role, involved in the degradation of carbazole, a toxic N-heterocyclic aromatic compound containing dibenzopyrrole system. Catalyzes the hydrolytic cleavage of a carbon-carbon bond of 2-hydroxy-6-oxo-6-(2'-aminophenyl)hexa-2,4-dienoic acid (HOPDA) to yield anthranilate. CarC is specific for 2-hydroxy-6-oxo-6-phenylhexa-2,4-dienoic acid (6-phenyl-HODA), and has little activity toward 2-hydroxy-6-oxohepta-2,4-dienoic acid and 2-hydroxymuconic semialdehyde. The effect of the presence of an amino group or hydroxyl group at the 2'-position of phenyl moiety of 6-phenyl-HODA on the enzyme activity is found to be small. This Metapseudomonas resinovorans (Pseudomonas resinovorans) protein is 2-hydroxy-6-oxo-6-(2'-aminophenyl)hexa-2,4-dienoic acid hydrolase (carC).